Here is a 706-residue protein sequence, read N- to C-terminus: Probable serine/threonine-protein kinase zyg-1 (706 aa).

Positions 13 to 249 (YSHLKEIGKG…LTQIVLSEFM (237 aa)) constitute a Protein kinase domain. Residues 19–27 (IGKGGFGVV) and Lys-41 each bind ATP. The active-site Proton acceptor is the Asp-131. Composition is skewed to basic and acidic residues over residues 261-290 (SREHSRDGRRQRSREPVRSSRDDRSRDGRA) and 323-336 (FDSERGRERDRDSG). Disordered stretches follow at residues 261–351 (SREH…NRSQ) and 566–632 (SPSS…VAPS). The span at 566 to 579 (SPSSLMPSGSSQTS) shows a compositional bias: low complexity. Polar residues-rich tracts occupy residues 580–592 (RFPFSNLSNNQPS) and 603–629 (KPTSSQRASSANVQRRVSTDENSSPSV).

The protein belongs to the protein kinase superfamily. Ser/Thr protein kinase family. As to quaternary structure, interacts with sel-10. Post-translationally, probably ubiquitinated by the SCF(sel-10) and SCF(lin-23) E3 ubiquitin ligase complexes, leading to its proteasomal degradation.

It localises to the cytoplasm. Its subcellular location is the cytoskeleton. It is found in the microtubule organizing center. The protein resides in the centrosome. The protein localises to the centriole. It carries out the reaction L-seryl-[protein] + ATP = O-phospho-L-seryl-[protein] + ADP + H(+). The enzyme catalyses L-threonyl-[protein] + ATP = O-phospho-L-threonyl-[protein] + ADP + H(+). Functionally, protein kinase that plays a central role in centrosome duplication, control of centrosome size, spindle formation and nuclear envelope breakdown during cell divisions. Paternal copy is required to regulate synthesis of daughter centrioles prior to fertilization. Maternal copy regulates centrosome duplication during later cell cycles. Functions upstream of sas-5 and sas-6, and is required for their localization to the centrosome. Its role in nuclear envelope breakdown is mediated by the spindly-like protein spdl-1 and the RZZ complex, which in turn recruits the spindle checkpoint proteins mdf-1 and mdf-2, dynein and dynactin to unattached kinetochores. The chain is Probable serine/threonine-protein kinase zyg-1 from Caenorhabditis elegans.